The sequence spans 517 residues: MWWTSLVFSVLLFDLIFISNCDYIHLPGNSDIPDLKLQSGYLNANENGTQKMFYFLLEARDIPVGEASLIIWFNGGPGCSSLSAFFEEFGPLYVNFGGKSLFENVHSWYHKANILFLESPIGVGFSYDTEQSNFTKVNDDSIAEQNFNSVIDFFQRKHSSYVNHDFFIAAESYGGVYGPMLSALVVDSISKREFPNENFKGLIIGNGFMNVKLSTNTMILWSAYHDRTSPDEWDEIKEKCATSGAHDVDYYDFMQFMKTTNKMDYLADNSTECGRLIEPLLGQFSETFDGYDFFNYYHDCYTNFSIPNATDPIKETLAQIPRRRISALFNKHSTDGQASYRCWADDALHKYLNLKEVQNALGIDRAWKDRKKKWEVCNMPIYDQYVMTHQDMTPFFSKIFDKFTGPAFRVLIYSGDIDTACNYLADGYFVRDLASIHGFKKTLKHGPWYHSEHKVIAGNFMRYEGANHLGSKLSIDVVTVKGSGHFVPLDRPGPALQMVHNFLTGKPGKMTNYTSPV.

Positions 1 to 21 are cleaved as a signal peptide; it reads MWWTSLVFSVLLFDLIFISNC. The active site involves serine 172. An N-linked (GlcNAc...) asparagine glycan is attached at asparagine 269. Residues aspartate 418 and histidine 485 contribute to the active site.

Belongs to the peptidase S10 family.

This is Serine carboxypeptidase ctsa-3.2 from Caenorhabditis elegans.